The chain runs to 308 residues: tRNA dimethylallyltransferase (308 aa).

17 to 24 (GPTGSGKS) contacts ATP. 19 to 24 (TGSGKS) contacts substrate.

This sequence belongs to the IPP transferase family. Monomer. It depends on Mg(2+) as a cofactor.

The catalysed reaction is adenosine(37) in tRNA + dimethylallyl diphosphate = N(6)-dimethylallyladenosine(37) in tRNA + diphosphate. Its function is as follows. Catalyzes the transfer of a dimethylallyl group onto the adenine at position 37 in tRNAs that read codons beginning with uridine, leading to the formation of N6-(dimethylallyl)adenosine (i(6)A). The protein is tRNA dimethylallyltransferase of Paenarthrobacter aurescens (strain TC1).